A 360-amino-acid polypeptide reads, in one-letter code: C-C chemokine receptor type 4 (360 aa).

The Extracellular segment spans residues 1 to 39 (MNATEVTDTTQDETVYNSYYFYESMPKPCTKEGIKAFGE). N2 carries N-linked (GlcNAc...) asparagine glycosylation. A helical membrane pass occupies residues 40–67 (VFLPPLYSLVFLLGLFGNSVVVLVLFKY). Topologically, residues 68–77 (KRLKSMTDVY) are cytoplasmic. A helical transmembrane segment spans residues 78 to 98 (LLNLAISDLLFVLSLPFWGYY). Residues 99 to 111 (AADQWVFGLGLCK) lie on the Extracellular side of the membrane. An intrachain disulfide couples C110 to C187. The helical transmembrane segment at 112–133 (IVSWMYLVGFYSGIFFIMLMSI) threads the bilayer. At 134 to 150 (DRYLAIVHAVFSLKART) the chain is on the cytoplasmic side. The helical transmembrane segment at 151-175 (LTYGVITSLITWSVAVFASLPGLLF) threads the bilayer. Over 176–206 (STCYTEHNHTYCKTQYSVNSTTWKVLSSLEI) the chain is Extracellular. N-linked (GlcNAc...) asparagine glycosylation is found at N183 and N194. A helical membrane pass occupies residues 207–226 (NVLGLLIPLGIMLFCYSMII). Over 227–242 (RTLQHCKNEKKNRAVR) the chain is Cytoplasmic. Residues 243–267 (MIFAVVVLFLGFWTPYNVVLFLETL) form a helical membrane-spanning segment. Residues 268 to 284 (VELEVLQDCTLERYLDY) are Extracellular-facing. Residues 285–308 (AIQATETLAFIHCCLNPVIYFFLG) form a helical membrane-spanning segment. Residues 309–360 (EKFRKYITQLFRTCRGPLVLCKHCDFLQVYSADMSSSSYTQSTVDHDFRDAL) lie on the Cytoplasmic side of the membrane.

It belongs to the G-protein coupled receptor 1 family. Post-translationally, in natural killer cells, CCL22 binding induces phosphorylation on yet undefined Ser/Thr residues, most probably by beta-adrenergic receptor kinases 1 and 2. Expressed in the thymus, macrophages and T- and B-cells.

Its subcellular location is the cell membrane. Functionally, high affinity receptor for the C-C type chemokines CCL17/TARC and CCL22/MDC. The activity of this receptor is mediated by G(i) proteins which activate a phosphatidylinositol-calcium second messenger system. Could play a role in lipopolysaccharide (LPS)-induced endotoxic shock. In the CNS, could mediate hippocampal-neuron survival. In Mus musculus (Mouse), this protein is C-C chemokine receptor type 4 (Ccr4).